The sequence spans 572 residues: Glutathione hydrolase 5 proenzyme (572 aa).

The Cytoplasmic segment spans residues 1–6; the sequence is MAWGHR. Residues 7–29 form a helical; Signal-anchor for type II membrane protein membrane-spanning segment; the sequence is TTVCLVLLGVSLGLAIIVLAVVL. The Extracellular portion of the chain corresponds to 30 to 572; sequence PHHQASCRPD…LRKAGKASGY (543 aa). N-linked (GlcNAc...) asparagine glycosylation is present at asparagine 98. Position 110 (arginine 110) interacts with L-glutamate. Asparagine 185, asparagine 194, asparagine 204, asparagine 277, asparagine 303, asparagine 347, and asparagine 377 each carry an N-linked (GlcNAc...) asparagine glycan. The Nucleophile role is filled by threonine 388. L-glutamate is bound by residues threonine 406, glutamate 427, and 453–454; that span reads SS.

The protein belongs to the gamma-glutamyltransferase family. Heterodimer composed of the light and heavy chains. The active site is located in the light chain. Post-translationally, cleaved by autocatalysis into a large and a small subunit. Glycosylated. As to expression, widely expressed, but at low level, except in the airway epithelial cells. Detected in brain, heart, kidney, liver, lung, spleen, testis and trachea.

The protein localises to the membrane. The enzyme catalyses glutathione + H2O = L-cysteinylglycine + L-glutamate. It carries out the reaction an S-substituted glutathione + H2O = an S-substituted L-cysteinylglycine + L-glutamate. The catalysed reaction is leukotriene C4 + H2O = leukotriene D4 + L-glutamate. It catalyses the reaction S-[(2E,6E,10E)-geranylgeranyl]-L-glutathione + H2O = S-[(2E,6E,10E)-geranylgeranyl]-L-cysteinylglycine + L-glutamate. The enzyme catalyses an N-terminal (5-L-glutamyl)-[peptide] + an alpha-amino acid = 5-L-glutamyl amino acid + an N-terminal L-alpha-aminoacyl-[peptide]. The protein operates within lipid metabolism; leukotriene D4 biosynthesis. It functions in the pathway sulfur metabolism; glutathione metabolism. With respect to regulation, inhibited by serine-borate. In terms of biological role, cleaves the gamma-glutamyl bond of extracellular glutathione tripeptide (gamma-Glu-Cys-Gly) and certain glutathione conjugates. Hydrolyzes glutathione releasing L-Glu and Cys-Gly dipeptide which is further metabolized to maintain extracellular cysteine levels but also to provide cysteine necessary for intracellular glutathione synthesis. Among glutathione-S-conjugates metabolizes leukotriene C4 (LTC4) and S-geranylgeranyl-glutathione (GGG), but is inactive toward gamma-glutamyl leucine. Converts extracellular LTC4 to LTD4 during acute inflammatory response. Acts as a negative regulator of GGG bioactivity. GGT5 (via GGG catabolism) and ABCC1 (via extracellular transport) establish GGG gradients within lymphoid tissues to position P2RY8-positive lymphocytes at germinal centers in lymphoid follicles and restrict their chemotactic transmigration from blood vessels to bone marrow parenchyma. The transpeptidation reaction, i.e. the transfer of gamma-glutamyl moiety to an acceptor molecule to yield a new gamma-glutamyl compound requires high concentration of dipeptide acceptor and is considered nonphysiological. In Rattus norvegicus (Rat), this protein is Glutathione hydrolase 5 proenzyme (Ggt5).